Reading from the N-terminus, the 873-residue chain is Leucine--tRNA ligase (873 aa).

Positions Pro-42–His-52 match the 'HIGH' region motif. The short motif at Lys-628 to Ser-632 is the 'KMSKS' region element. Lys-631 contacts ATP.

It belongs to the class-I aminoacyl-tRNA synthetase family.

The protein resides in the cytoplasm. It catalyses the reaction tRNA(Leu) + L-leucine + ATP = L-leucyl-tRNA(Leu) + AMP + diphosphate. The sequence is that of Leucine--tRNA ligase from Azoarcus sp. (strain BH72).